The sequence spans 258 residues: NAD kinase (258 aa).

Catalysis depends on Asp-51, which acts as the Proton acceptor. Residues 51–52, Lys-56, 119–120, Lys-130, Asp-149, 160–165, and Ala-184 each bind NAD(+); these read DG, ND, and TAYSLS.

This sequence belongs to the NAD kinase family. The cofactor is a divalent metal cation.

Its subcellular location is the cytoplasm. The enzyme catalyses NAD(+) + ATP = ADP + NADP(+) + H(+). Its function is as follows. Involved in the regulation of the intracellular balance of NAD and NADP, and is a key enzyme in the biosynthesis of NADP. Catalyzes specifically the phosphorylation on 2'-hydroxyl of the adenosine moiety of NAD to yield NADP. This is NAD kinase from Thermotoga sp. (strain RQ2).